The chain runs to 317 residues: Putative 2-hydroxyacid dehydrogenase SE_1879 (317 aa).

NAD(+)-binding positions include 155–156, 234–236, and Asp260; these read EI and AGR. Arg236 is a catalytic residue. Residue Glu265 is part of the active site. The active-site Proton donor is the His283. 283 to 286 serves as a coordination point for NAD(+); that stretch reads HIGN.

This sequence belongs to the D-isomer specific 2-hydroxyacid dehydrogenase family.

The polypeptide is Putative 2-hydroxyacid dehydrogenase SE_1879 (Staphylococcus epidermidis (strain ATCC 12228 / FDA PCI 1200)).